A 314-amino-acid chain; its full sequence is tRNA pseudouridine synthase B (314 aa).

Residue Asp47 is the Nucleophile of the active site.

This sequence belongs to the pseudouridine synthase TruB family. Type 1 subfamily.

It carries out the reaction uridine(55) in tRNA = pseudouridine(55) in tRNA. Responsible for synthesis of pseudouridine from uracil-55 in the psi GC loop of transfer RNAs. The polypeptide is tRNA pseudouridine synthase B (Vibrio vulnificus (strain CMCP6)).